The chain runs to 491 residues: Nucleotidyltransferase MB21D2 (491 aa).

Residues 431 to 442 show a composition bias toward polar residues; it reads RGSTTSIPSPQS. Residues 431–452 form a disordered region; it reads RGSTTSIPSPQSDGGDPNQPDD. At threonine 435 the chain carries Phosphothreonine. Residues serine 436, serine 439, and serine 442 each carry the phosphoserine modification.

The protein belongs to the mab-21 family.

Probable nucleotidyltransferase that catalyzes the formation of cyclic dinucleotide second messenger in response to some unknown stimulus. The sequence is that of Nucleotidyltransferase MB21D2 from Homo sapiens (Human).